A 1246-amino-acid polypeptide reads, in one-letter code: Myosin-1 (1246 aa).

The interval 1-41 is disordered; it reads MGHSRRPVGGEKKSRGFGRSKAVADVGDGRQTGGKPQVKKA. The region spanning 51–730 is the Myosin motor domain; that stretch reads IGVSDLTLLS…TLFALEAMRD (680 aa). 144-151 is a binding site for ATP; sequence GESGAGKT. Ser372 is subject to Phosphoserine. The actin-binding stretch occupies residues 419–501; the sequence is SIGILDIYGF…PGVFAALNDA (83 aa). 2 IQ domains span residues 734–754 and 755–780; these read HNMA…RIEC and AIRI…QGHK. One can recognise a TH1 domain in the interval 788 to 976; that stretch reads RRRMSLLGSR…TIHTSAGEPP (189 aa). A compositionally biased stretch (polar residues) spans 956-970; it reads GSSNVDTYKSSTIHT. 2 disordered regions span residues 956–1080 and 1127–1246; these read GSSN…PKKP and WTPQ…DDEW. Pro residues-rich tracts occupy residues 1033–1045 and 1065–1078; these read APQP…PVPQ and APPP…PAPK. One can recognise an SH3 domain in the interval 1077-1138; it reads PKKPMAKVLY…PQAYLEEQKA (62 aa). Low complexity-rich tracts occupy residues 1151–1166 and 1214–1228; these read TPAT…AKAK and NSAS…LAEA. Residues 1229 to 1240 are compositionally biased toward basic and acidic residues; sequence LRQRQEAMHGKQ.

Belongs to the TRAFAC class myosin-kinesin ATPase superfamily. Myosin family. In terms of processing, phosphorylation of the TEDS site (Ser-372) is required for the polarization of the actin cytoskeleton. Phosphorylation probably activates the myosin-I ATPase activity.

It is found in the cytoplasm. Its subcellular location is the cytoskeleton. It localises to the actin patch. In terms of biological role, type-I myosin implicated in the organization of the actin cytoskeleton. Required for proper actin cytoskeleton polarization. At the cell cortex, assembles in patch-like structures together with proteins from the actin-polymerizing machinery and promotes actin assembly. Functions as actin nucleation-promoting factor (NPF) for the Arp2/3 complex. Plays an important role in polarized growth, spore germination, hyphal morphogenesis, and septal wall formation. The polypeptide is Myosin-1 (myoA) (Aspergillus terreus (strain NIH 2624 / FGSC A1156)).